The chain runs to 160 residues: Deoxyuridine 5'-triphosphate nucleotidohydrolase (160 aa).

Substrate-binding positions include 79–81 (RSG), Asn-92, 96–98 (TVD), and Lys-106.

The protein belongs to the dUTPase family. It depends on Mg(2+) as a cofactor.

It carries out the reaction dUTP + H2O = dUMP + diphosphate + H(+). The protein operates within pyrimidine metabolism; dUMP biosynthesis; dUMP from dCTP (dUTP route): step 2/2. Functionally, this enzyme is involved in nucleotide metabolism: it produces dUMP, the immediate precursor of thymidine nucleotides and it decreases the intracellular concentration of dUTP so that uracil cannot be incorporated into DNA. The chain is Deoxyuridine 5'-triphosphate nucleotidohydrolase from Rhizobium meliloti (strain 1021) (Ensifer meliloti).